Consider the following 269-residue polypeptide: Shikimate dehydrogenase (NADP(+)) (269 aa).

Shikimate-binding positions include 22–24 (TLS) and Thr68. Lys72 (proton acceptor) is an active-site residue. 2 residues coordinate shikimate: Asn93 and Asp104. Residues 128–132 (GAGGA), 152–157 (NRTNLR), and Phe210 contribute to the NADP(+) site. Shikimate is bound at residue Tyr212. Gly233 contacts NADP(+).

This sequence belongs to the shikimate dehydrogenase family. In terms of assembly, homodimer.

It catalyses the reaction shikimate + NADP(+) = 3-dehydroshikimate + NADPH + H(+). Its pathway is metabolic intermediate biosynthesis; chorismate biosynthesis; chorismate from D-erythrose 4-phosphate and phosphoenolpyruvate: step 4/7. Functionally, involved in the biosynthesis of the chorismate, which leads to the biosynthesis of aromatic amino acids. Catalyzes the reversible NADPH linked reduction of 3-dehydroshikimate (DHSA) to yield shikimate (SA). This Saccharolobus islandicus (strain L.S.2.15 / Lassen #1) (Sulfolobus islandicus) protein is Shikimate dehydrogenase (NADP(+)).